A 631-amino-acid polypeptide reads, in one-letter code: 1-deoxy-D-xylulose-5-phosphate synthase (631 aa).

Thiamine diphosphate contacts are provided by residues His87 and 128 to 130 (GHS). Asp159 provides a ligand contact to Mg(2+). Thiamine diphosphate is bound by residues 160 to 161 (GA), Asn188, Phe295, and Glu377. Asn188 serves as a coordination point for Mg(2+).

Belongs to the transketolase family. DXPS subfamily. In terms of assembly, homodimer. Mg(2+) is required as a cofactor. Thiamine diphosphate serves as cofactor.

The catalysed reaction is D-glyceraldehyde 3-phosphate + pyruvate + H(+) = 1-deoxy-D-xylulose 5-phosphate + CO2. The protein operates within metabolic intermediate biosynthesis; 1-deoxy-D-xylulose 5-phosphate biosynthesis; 1-deoxy-D-xylulose 5-phosphate from D-glyceraldehyde 3-phosphate and pyruvate: step 1/1. Its function is as follows. Catalyzes the acyloin condensation reaction between C atoms 2 and 3 of pyruvate and glyceraldehyde 3-phosphate to yield 1-deoxy-D-xylulose-5-phosphate (DXP). This Pseudomonas putida (strain ATCC 700007 / DSM 6899 / JCM 31910 / BCRC 17059 / LMG 24140 / F1) protein is 1-deoxy-D-xylulose-5-phosphate synthase.